The sequence spans 90 residues: Signal recognition particle 19 kDa protein (90 aa).

Belongs to the SRP19 family. As to quaternary structure, part of the signal recognition particle protein translocation system, which is composed of SRP and FtsY. Archaeal SRP consists of a 7S RNA molecule of 300 nucleotides and two protein subunits: SRP54 and SRP19.

It is found in the cytoplasm. Involved in targeting and insertion of nascent membrane proteins into the cytoplasmic membrane. Binds directly to 7S RNA and mediates binding of the 54 kDa subunit of the SRP. This Methanococcus aeolicus (strain ATCC BAA-1280 / DSM 17508 / OCM 812 / Nankai-3) protein is Signal recognition particle 19 kDa protein.